Here is a 749-residue protein sequence, read N- to C-terminus: Homeobox-leucine zipper protein ROC7 (749 aa).

The interval 26–98 (LDQHQQHQHQ…KKRYHRHTQH (73 aa)) is disordered. The segment covering 46–57 (SDGRAPRDELEM) has biased composition (basic and acidic residues). Positions 68–79 (SGGGGGGGGSGG) are enriched in gly residues. The segment covering 86–97 (RPRKKRYHRHTQ) has biased composition (basic residues). A DNA-binding region (homeobox) is located at residues 88–147 (RKKRYHRHTQHQIQELEAFFKECPHPDDKQRKELSRELGLEPLQVKFWFQNKRTQMKTQH). Residues 137–218 (QNKRTQMKTQ…DRISAIAAKY (82 aa)) are a coiled coil. The START domain occupies 256-494 (ADFDKPLVIE…LERQCERLAS (239 aa)).

Belongs to the HD-ZIP homeobox family. Class IV subfamily.

It localises to the nucleus. Its function is as follows. Probable transcription factor. This Oryza sativa subsp. japonica (Rice) protein is Homeobox-leucine zipper protein ROC7 (ROC7).